The chain runs to 144 residues: Apidaecins type 22 (144 aa).

Positions 1–19 (MKNFALAILVVTFVVAVFG) are cleaved as a signal peptide. 4 propeptides span residues 20 to 42 (NTNLDPPTRPTRLRREAEPEAEP), 63 to 70 (EAEPEAEP), 91 to 98 (EAEPEAEP), and 119 to 126 (EAEPEAEP). A disordered region spans residues 20 to 144 (NTNLDPPTRP…PQPRPPHPRI (125 aa)). A compositionally biased stretch (pro residues) spans 134–144 (IPQPRPPHPRI).

The protein belongs to the apidaecin family.

It localises to the secreted. Functionally, apidaecins have bactericidal activity; predominantly against Gram-negative bacteria. They seem to interfere with cell propagation. This Apis mellifera (Honeybee) protein is Apidaecins type 22.